An 852-amino-acid chain; its full sequence is MAKEKISPGMQQYLDIKKNYPDAFLLFRMGDFYELFYDDAVKAAQILEISLTSRNKNADNPIPMAGVPYHSAQAYIDVLVEMGYKVAIAEQMEDPKQAVGVVKREVVQVITPGTVVDSSKPDSANNFLVAIDKVGSRFGLSYMDVSTGEFFATELDDFSSVCSEIQNLKAREVVVGYDLLETDEQVLVNQLNLLLSKETEGYDDVHLIGNSLTDLESSVASKLLQYVHRTQMRELSHLQKAQHYEIKDYLQMSYATKSSLDLLENARTGKKHGSLFWLLDKTKTAMGMRLLRTWIDRPLVNQASIIERQNIIQVFLDNFFERSDLTESLKGVYDIERLASRVSFGKANPKDLIQLGHTLAQVPIIKAILESFNDDALSGLLQELDALPELESLIRSAIDPDAPATITEGGIIRDGFDETLDKYRKVMSEGTSWIADIEAKEREASGITTLKIDYNRKDGYYFHVTNSNLSLVPDHFFRKATLKNSERFGTAELAKIEGEMLEAREKSSTLEYDIFMRVREQVERYIDRLQSLAKAIATVDVLQSLAVTAETNHYVRPVFNDEHRIAIDRGRHAVVEKVMGVQEYIPNTITFDSQTNIQLITGPNMSGKSTYMRQLALSVVMAQMGAYVPADSVDLPVFDAIYTRIGAADDLISGQSTFMVEMMEANQAIKRATPNSLIIFDELGRGTATYDGMALAQSIIEFIHDKVGAKTMFATHYHELTALSNSLTHLVNVHVATLEKDGEVTFLHKIVDGPADKSYGIHVAKIAGLPTDLLNRADTILTQLEGETVVIQPQEKVSSQEKPAIETHVNEQISLFDDFTENPVLQELRDLDIYNMTPMQVMMAVADLKQKL.

602–609 (GPNMSGKS) serves as a coordination point for ATP.

Belongs to the DNA mismatch repair MutS family.

In terms of biological role, this protein is involved in the repair of mismatches in DNA. It is possible that it carries out the mismatch recognition step. This protein has a weak ATPase activity. This chain is DNA mismatch repair protein MutS, found in Streptococcus thermophilus (strain ATCC BAA-491 / LMD-9).